The sequence spans 344 residues: Anthranilate phosphoribosyltransferase (344 aa).

5-phospho-alpha-D-ribose 1-diphosphate is bound by residues Gly-80, 83–84 (GD), Thr-88, 90–93 (NVST), 108–116 (KHGNRSVSS), and Ser-120. Gly-80 contributes to the anthranilate binding site. Ser-92 contributes to the Mg(2+) binding site. Asn-111 provides a ligand contact to anthranilate. Arg-166 provides a ligand contact to anthranilate. Asp-225 and Glu-226 together coordinate Mg(2+).

It belongs to the anthranilate phosphoribosyltransferase family. Homodimer. Requires Mg(2+) as cofactor.

It catalyses the reaction N-(5-phospho-beta-D-ribosyl)anthranilate + diphosphate = 5-phospho-alpha-D-ribose 1-diphosphate + anthranilate. Its pathway is amino-acid biosynthesis; L-tryptophan biosynthesis; L-tryptophan from chorismate: step 2/5. In terms of biological role, catalyzes the transfer of the phosphoribosyl group of 5-phosphorylribose-1-pyrophosphate (PRPP) to anthranilate to yield N-(5'-phosphoribosyl)-anthranilate (PRA). This is Anthranilate phosphoribosyltransferase from Legionella pneumophila (strain Lens).